Here is a 148-residue protein sequence, read N- to C-terminus: Cysteine proteinase inhibitor 5 (148 aa).

The signal sequence occupies residues 1–25 (MASKLYYAVAPLVLVLLLLAPLSSA). The short motif at 99–103 (QVVSG) is the Secondary area of contact element.

It belongs to the cystatin family. Phytocystatin subfamily.

The protein resides in the secreted. Specific inhibitor of cysteine proteinases. Probably involved in the regulation of endogenous processes and in defense against pests and pathogens. This Oryza sativa subsp. japonica (Rice) protein is Cysteine proteinase inhibitor 5.